A 186-amino-acid polypeptide reads, in one-letter code: Large ribosomal subunit protein uL22 (186 aa).

Serine 158 bears the Phosphoserine mark. A disordered region spans residues 159 to 186; sequence KATDDEPAKKKLSKKKLQRQKEKMLRSE. Threonine 161 carries the post-translational modification Phosphothreonine. Positions 177 to 186 are enriched in basic and acidic residues; it reads RQKEKMLRSE.

It belongs to the universal ribosomal protein uL22 family.

In Drosophila melanogaster (Fruit fly), this protein is Large ribosomal subunit protein uL22 (RpL17).